The sequence spans 208 residues: Large ribosomal subunit protein uL3 (208 aa).

Glutamine 150 carries the post-translational modification N5-methylglutamine.

It belongs to the universal ribosomal protein uL3 family. As to quaternary structure, part of the 50S ribosomal subunit. Forms a cluster with proteins L14 and L19. Post-translationally, methylated by PrmB.

Its function is as follows. One of the primary rRNA binding proteins, it binds directly near the 3'-end of the 23S rRNA, where it nucleates assembly of the 50S subunit. In Buchnera aphidicola subsp. Cinara cedri (strain Cc), this protein is Large ribosomal subunit protein uL3.